Reading from the N-terminus, the 198-residue chain is uncharacterized protein (198 aa).

This is an uncharacterized protein from Homo sapiens (Human).